A 589-amino-acid chain; its full sequence is Sentrin-specific protease 2 (589 aa).

The Nuclear localization signal motif lies at 28–31 (KRRR). A Phosphoserine modification is found at Ser-32. Positions 46-51 (PAKRPR) match the Nuclear localization signal motif. An axin-binding region spans residues 71 to 382 (GFPFQLTTKP…EKEISNALGH (312 aa)). Disordered stretches follow at residues 148–179 (SFGF…LMWK) and 191–210 (EESG…GVQK). Residues 317-332 (LEPDLSEEVSARLRLG) carry the Nuclear export signal motif. Residues Ser-333 and Ser-344 each carry the phosphoserine modification. The segment at 395 to 559 (LRITRGDIQT…MFTCKYADYI (165 aa)) is protease. Residues His-478 and Asp-495 contribute to the active site. Cys-548 functions as the Nucleophile in the catalytic mechanism.

The protein belongs to the peptidase C48 family. As to quaternary structure, binds to SUMO2 and SUMO3. Interacts with the C-terminal domain of NUP153 via its N-terminus. Interacts with MTA1. In terms of processing, polyubiquitinated; which leads to proteasomal degradation.

It localises to the nucleus. It is found in the nuclear pore complex. The protein localises to the nucleus membrane. The protein resides in the cytoplasm. In terms of biological role, protease that catalyzes two essential functions in the SUMO pathway. The first is the hydrolysis of an alpha-linked peptide bond at the C-terminal end of the small ubiquitin-like modifier (SUMO) propeptides, SUMO1, SUMO2 and SUMO3 leading to the mature form of the proteins. The second is the deconjugation of SUMO1, SUMO2 and SUMO3 from targeted proteins, by cleaving an epsilon-linked peptide bond between the C-terminal glycine of the mature SUMO and the lysine epsilon-amino group of the target protein. May down-regulate CTNNB1 levels and thereby modulate the Wnt pathway. Deconjugates SUMO2 from MTA1. Plays a dynamic role in adipogenesis by desumoylating and promoting the stabilization of CEBPB. Acts as a regulator of the cGAS-STING pathway by catalyzing desumoylation of CGAS and STING1 during the late phase of viral infection. The protein is Sentrin-specific protease 2 (SENP2) of Pongo abelii (Sumatran orangutan).